The chain runs to 605 residues: Protein Spindly (605 aa).

Residue M1 is modified to N-acetylmethionine. Residues T3–E442 are a coiled coil. A phosphoserine mark is found at S513, S515, and S555. The segment at L545–E581 is disordered. Positions L564–E581 are enriched in basic and acidic residues.

Belongs to the Spindly family. As to quaternary structure, interacts with KNTC1 and ZW10. These interactions appear weak and may be transient or indirect. Interacts with dynein intermediate chain and dynactin (DCTN1). Interacts with the catalytically active form of USP45. Monoubiquitinated with'Lys-48' linkage. Deubiquitinated by USP45.

The protein localises to the cytoplasm. It is found in the cytoskeleton. It localises to the microtubule organizing center. Its subcellular location is the centrosome. The protein resides in the chromosome. The protein localises to the centromere. It is found in the kinetochore. It localises to the nucleus. Its subcellular location is the spindle pole. Functionally, required for the localization of dynein and dynactin to the mitotic kintochore. Dynein is believed to control the initial lateral interaction between the kinetochore and spindle microtubules and to facilitate the subsequent formation of end-on kinetochore-microtubule attachments mediated by the NDC80 complex. Also required for correct spindle orientation. Does not appear to be required for the removal of spindle assembly checkpoint (SAC) proteins from the kinetochore upon bipolar spindle attachment. Acts as an adapter protein linking the dynein motor complex to various cargos and converts dynein from a non-processive to a highly processive motor in the presence of dynactin. Facilitates the interaction between dynein and dynactin and activates dynein processivity (the ability to move along a microtubule for a long distance without falling off the track). Plays a role in cell migration. This is Protein Spindly from Macaca fascicularis (Crab-eating macaque).